We begin with the raw amino-acid sequence, 409 residues long: 1-deoxy-D-xylulose 5-phosphate reductoisomerase (409 aa).

NADPH contacts are provided by Thr-10, Gly-11, Ser-12, Ile-13, Gly-36, Arg-37, Asn-38, and Asn-126. Lys-127 is a 1-deoxy-D-xylulose 5-phosphate binding site. Glu-128 contacts NADPH. Mn(2+) is bound at residue Asp-152. 1-deoxy-D-xylulose 5-phosphate-binding residues include Ser-153, Glu-154, Ser-190, and His-213. Glu-154 provides a ligand contact to Mn(2+). Gly-219 serves as a coordination point for NADPH. Residues Ser-226, Asn-231, Lys-232, and Glu-235 each coordinate 1-deoxy-D-xylulose 5-phosphate. Residue Glu-235 coordinates Mn(2+).

This sequence belongs to the DXR family. Requires Mg(2+) as cofactor. Mn(2+) is required as a cofactor.

The enzyme catalyses 2-C-methyl-D-erythritol 4-phosphate + NADP(+) = 1-deoxy-D-xylulose 5-phosphate + NADPH + H(+). It functions in the pathway isoprenoid biosynthesis; isopentenyl diphosphate biosynthesis via DXP pathway; isopentenyl diphosphate from 1-deoxy-D-xylulose 5-phosphate: step 1/6. Functionally, catalyzes the NADPH-dependent rearrangement and reduction of 1-deoxy-D-xylulose-5-phosphate (DXP) to 2-C-methyl-D-erythritol 4-phosphate (MEP). The polypeptide is 1-deoxy-D-xylulose 5-phosphate reductoisomerase (Prochlorococcus marinus (strain MIT 9515)).